We begin with the raw amino-acid sequence, 902 residues long: Protein translocase subunit SecA (902 aa).

Residues Q87, 105-109 (GEGKT), and D512 contribute to the ATP site. Residues 847-902 (DAERLARQQQLSHLDDQSAAAQEMASQTGDRKIGRNDPCPCGSGKKYKQCHGRLNA) are disordered. Residues C885, C887, C896, and H897 each contribute to the Zn(2+) site. The span at 891-902 (KKYKQCHGRLNA) shows a compositional bias: basic residues.

Belongs to the SecA family. In terms of assembly, monomer and homodimer. Part of the essential Sec protein translocation apparatus which comprises SecA, SecYEG and auxiliary proteins SecDF-YajC and YidC. Requires Zn(2+) as cofactor.

It is found in the cell inner membrane. It localises to the cytoplasm. The catalysed reaction is ATP + H2O + cellular proteinSide 1 = ADP + phosphate + cellular proteinSide 2.. Part of the Sec protein translocase complex. Interacts with the SecYEG preprotein conducting channel. Has a central role in coupling the hydrolysis of ATP to the transfer of proteins into and across the cell membrane, serving both as a receptor for the preprotein-SecB complex and as an ATP-driven molecular motor driving the stepwise translocation of polypeptide chains across the membrane. The chain is Protein translocase subunit SecA from Edwardsiella ictaluri (strain 93-146).